The primary structure comprises 88 residues: MRIYSLLILSFLLLASAVLINSAEMPRSEKSLLYSIMQGREDSEEGRCLGPMDECNVFDDNCCAGWLKCNCDWGFAGNCRCSKTPKEG.

A signal peptide spans 1 to 17; it reads MRIYSLLILSFLLLASA. Residues 18-47 constitute a propeptide that is removed on maturation; it reads VLINSAEMPRSEKSLLYSIMQGREDSEEGR. 4 disulfide bridges follow: Cys48–Cys63, Cys55–Cys69, Cys62–Cys81, and Cys71–Cys79.

It belongs to the neurotoxin 07 (Beta/delta-agtx) family. 02 (aga-3) subfamily. In terms of tissue distribution, expressed by the venom gland.

Its subcellular location is the secreted. In terms of biological role, weak insecticidal toxin with probable ion channel impairing activity. In vivo, induces paralysis when injected into sheep blowflies (L.cuprina). Shows weak toxicity, since it is only toxic at high doses, and flies recover within 24 hours. The polypeptide is U18-hexatoxin-Hi1a (Hadronyche infensa (Fraser island funnel-web spider)).